The following is a 196-amino-acid chain: Probable cobalt-precorrin-6B C(15)-methyltransferase (decarboxylating) (196 aa).

Residues threonine 24, 48–52 (GCGTG), aspartate 72, and alanine 101 contribute to the S-adenosyl-L-methionine site.

Belongs to the methyltransferase superfamily. Archaeal-type CbiT family.

It carries out the reaction Co-precorrin-6B + S-adenosyl-L-methionine = Co-precorrin-7 + S-adenosyl-L-homocysteine + CO2. It participates in cofactor biosynthesis; adenosylcobalamin biosynthesis; cob(II)yrinate a,c-diamide from sirohydrochlorin (anaerobic route): step 8/10. In terms of biological role, catalyzes the methylation of C-15 in cobalt-precorrin-6B followed by the decarboxylation of C-12 to form cobalt-precorrin-7. In Pyrobaculum aerophilum (strain ATCC 51768 / DSM 7523 / JCM 9630 / CIP 104966 / NBRC 100827 / IM2), this protein is Probable cobalt-precorrin-6B C(15)-methyltransferase (decarboxylating).